A 210-amino-acid polypeptide reads, in one-letter code: LexA repressor (210 aa).

A DNA-binding region (H-T-H motif) is located at residues Arg-31–Lys-51. Catalysis depends on for autocatalytic cleavage activity residues Ser-126 and Lys-163.

The protein belongs to the peptidase S24 family. In terms of assembly, homodimer.

The enzyme catalyses Hydrolysis of Ala-|-Gly bond in repressor LexA.. Represses a number of genes involved in the response to DNA damage (SOS response), including recA and lexA. In the presence of single-stranded DNA, RecA interacts with LexA causing an autocatalytic cleavage which disrupts the DNA-binding part of LexA, leading to derepression of the SOS regulon and eventually DNA repair. This is LexA repressor from Actinobacillus succinogenes (strain ATCC 55618 / DSM 22257 / CCUG 43843 / 130Z).